Reading from the N-terminus, the 61-residue chain is Large ribosomal subunit protein bL32 (61 aa).

The span at 1-22 (MAVPKKKTSRARRDRRRSHHAL) shows a compositional bias: basic residues. The tract at residues 1–24 (MAVPKKKTSRARRDRRRSHHALRG) is disordered.

This sequence belongs to the bacterial ribosomal protein bL32 family.

This chain is Large ribosomal subunit protein bL32, found in Rubrobacter xylanophilus (strain DSM 9941 / JCM 11954 / NBRC 16129 / PRD-1).